Reading from the N-terminus, the 490-residue chain is Beta-N-acetyl-D-glucosaminide beta-1,4-N-acetylglucosaminyl-transferase (490 aa).

The Cytoplasmic segment spans residues 1–30; that stretch reads MYLVVCWGRVTGNMISTRHCFSRCKSRSVR. Residues 31–50 form a helical; Signal-anchor for type II membrane protein membrane-spanning segment; the sequence is VIKATAMLFVAAMLFLALHM. 5 N-linked (GlcNAc...) asparagine glycosylation sites follow: asparagine 51, asparagine 82, asparagine 441, asparagine 459, and asparagine 485. Topologically, residues 51–490 are lumenal; sequence NFSHEASQQN…YLTGNFTIIS (440 aa).

Belongs to the glycosyltransferase 7 family.

It is found in the golgi apparatus membrane. The catalysed reaction is an N-acetyl-beta-D-glucosaminyl derivative + UDP-N-acetyl-alpha-D-glucosamine = an N-acetyl-beta-D-glucosaminyl-(1-&gt;4)-N-acetyl-beta-D-glucosaminyl derivative + UDP + H(+). The protein operates within protein modification; protein glycosylation. In Lymnaea stagnalis (Great pond snail), this protein is Beta-N-acetyl-D-glucosaminide beta-1,4-N-acetylglucosaminyl-transferase (GNT).